The following is a 962-amino-acid chain: Ran-binding proteins 9/10 homolog (962 aa).

Low complexity-rich tracts occupy residues 1-33 (MENV…LSQS) and 41-52 (APSTSRSHSHSP). Disordered stretches follow at residues 1–246 (MENV…EQQP), 271–296 (EDDD…EVAS), and 313–402 (SSAS…QGVD). The segment covering 80–91 (TEARENSPHDHS) has biased composition (basic and acidic residues). Low complexity predominate over residues 118-132 (QQQQEAPPLQQDQQE). Residues 146–164 (DQQNQEYPAVHQDQQAEQN) show a composition bias toward polar residues. Residues 165–202 (QELHHIEGLIRHRESQNPEEHPPQASLENRETLGREDT) are compositionally biased toward basic and acidic residues. The segment covering 236-245 (SGSQDLNEQQ) has biased composition (polar residues). A compositionally biased stretch (acidic residues) spans 271–284 (EDDDEEVDEEEEVV). Positions 321-343 (SSNNNNNNISNHNNNNNNSNSNS) are enriched in low complexity. Composition is skewed to polar residues over residues 351 to 360 (FYSNNGSHFS) and 368 to 378 (NPRSSTQTSSP). Phosphoserine occurs at positions 387, 393, and 395. Positions 389 to 398 (PAASSNSPQH) are enriched in polar residues. Residues 400-587 (GVDPLRLLYP…VDANFGQEPF (188 aa)) enclose the B30.2/SPRY domain. A LisH domain is found at 617 to 649 (PENLMNRLVSTYLVHNAFSKTAEAFNGYTNQTF). The CTLH domain maps to 655–712 (SIKTRQKIIKLILTGKMSQAIEHTLRSFPGLLENNKNLWFALKCRQFIEMINGADIEN). The disordered stretch occupies residues 800–820 (EMEPCQSHSNGGDSSSNGNAS). Residues 806 to 820 (SHSNGGDSSSNGNAS) are compositionally biased toward low complexity.

Belongs to the RANBP9/10 family. In terms of tissue distribution, expressed in the GSCs and in dividing cysts. Expression is reduced in the germline as individual egg chambers are formed. Isoform C is expressed in all somatic and germline cells of the ovary. Isoform D is expressed in the GSC niche.

It localises to the cytoplasm. It is found in the membrane. Its subcellular location is the nucleus. In terms of biological role, may be involved in JAK/STAT signaling. Isoform D is required for the proper arrangement of niche cells and is autonomously required for proper niche cell size, isoform C negatively regulates the adhesive properties of the niche. The germline stem cell (GSC) niche in ovaries is made up of two somatic cell types: 8-9 cells in a single-filed array make up the terminal filament (TF), and a tight cluster of 5 or 6 cap cells (CpC). Regulating the size and adhesive properties of the CpCs is an important component of the mechanism that controls their capacity to support stem cells, isoform C and isoform D are important factors in mediating this regulation. In contrast, isoform C acts as a positive regulator of cell adhesion in follicle cell epithelium. The sequence is that of Ran-binding proteins 9/10 homolog (RanBPM) from Drosophila melanogaster (Fruit fly).